We begin with the raw amino-acid sequence, 212 residues long: Pyridoxine/pyridoxamine 5'-phosphate oxidase (212 aa).

Substrate-binding positions include Arg-7–Tyr-10 and Lys-65. FMN is bound by residues Arg-60–Lys-65, Phe-75–Thr-76, Lys-82, and Gln-104. Residues Tyr-122, Arg-126, and Ser-130 each contribute to the substrate site. FMN contacts are provided by residues Gln-139–Ser-140 and Trp-184. Arg-190–His-192 provides a ligand contact to substrate. Arg-194 contacts FMN.

The protein belongs to the pyridoxamine 5'-phosphate oxidase family. Homodimer. FMN is required as a cofactor.

It carries out the reaction pyridoxamine 5'-phosphate + O2 + H2O = pyridoxal 5'-phosphate + H2O2 + NH4(+). The catalysed reaction is pyridoxine 5'-phosphate + O2 = pyridoxal 5'-phosphate + H2O2. It functions in the pathway cofactor metabolism; pyridoxal 5'-phosphate salvage; pyridoxal 5'-phosphate from pyridoxamine 5'-phosphate: step 1/1. Its pathway is cofactor metabolism; pyridoxal 5'-phosphate salvage; pyridoxal 5'-phosphate from pyridoxine 5'-phosphate: step 1/1. Its function is as follows. Catalyzes the oxidation of either pyridoxine 5'-phosphate (PNP) or pyridoxamine 5'-phosphate (PMP) into pyridoxal 5'-phosphate (PLP). This chain is Pyridoxine/pyridoxamine 5'-phosphate oxidase, found in Rippkaea orientalis (strain PCC 8801 / RF-1) (Cyanothece sp. (strain PCC 8801)).